We begin with the raw amino-acid sequence, 312 residues long: Malate dehydrogenase (312 aa).

NAD(+) is bound by residues Gly-12–Gly-17 and Asp-36. The substrate site is built by Arg-87 and Arg-93. Residues Asn-100 and Leu-123–Asn-125 each bind NAD(+). Residue Asn-125 participates in substrate binding. At Ser-149 the chain carries Phosphoserine. Arg-156 provides a ligand contact to substrate. Residue His-180 is the Proton acceptor of the active site.

Belongs to the LDH/MDH superfamily. MDH type 3 family.

The enzyme catalyses (S)-malate + NAD(+) = oxaloacetate + NADH + H(+). Catalyzes the reversible oxidation of malate to oxaloacetate. The sequence is that of Malate dehydrogenase from Oceanobacillus iheyensis (strain DSM 14371 / CIP 107618 / JCM 11309 / KCTC 3954 / HTE831).